The sequence spans 209 residues: Redox-sensing transcriptional repressor Rex (209 aa).

Residues 16 to 55 constitute a DNA-binding region (H-T-H motif); sequence LYYRFIQNLSLSGKQRVSSAELSEAVKVDSATIRRDFSYF. 90–95 is an NAD(+) binding site; it reads GVGNLG.

It belongs to the transcriptional regulatory Rex family. As to quaternary structure, homodimer.

The protein resides in the cytoplasm. In terms of biological role, modulates transcription in response to changes in cellular NADH/NAD(+) redox state. The sequence is that of Redox-sensing transcriptional repressor Rex from Bacillus cereus (strain AH187).